A 318-amino-acid polypeptide reads, in one-letter code: MARRPKGRFIDGIVLLDKSTGMSSNFALQRVKRFFNANKAGHTGALDPLATGMLPVCLGEATKFSQHLLDADKRYLVTAKLGERTDTSDSDGEVVQTRPVTFTEAQLLSALEHFRGDTQQVPSMYSALKYQGQPLYKYAREGIEVPRESRPITVFELNFISLEGDELTLDIHCSKGTYIRTIIDDLGEMLGCGAHVIMLRRTQVAQYPYAKMVTLEQLEALVTQAHEQQIDPSVLLDPLLLPMDTAVADFPEVNVPEASAAYLMQGQAVRVTGLKADTLVRITLGDAHRFVGIGAMNDDGLLAPKRLIVIHDEPIVTD.

Residue Asp47 is the Nucleophile of the active site.

Belongs to the pseudouridine synthase TruB family. Type 1 subfamily.

The enzyme catalyses uridine(55) in tRNA = pseudouridine(55) in tRNA. Responsible for synthesis of pseudouridine from uracil-55 in the psi GC loop of transfer RNAs. This is tRNA pseudouridine synthase B from Shewanella putrefaciens (strain CN-32 / ATCC BAA-453).